A 515-amino-acid polypeptide reads, in one-letter code: Maturase K (515 aa).

This sequence belongs to the intron maturase 2 family. MatK subfamily.

The protein resides in the plastid. It localises to the chloroplast. Functionally, usually encoded in the trnK tRNA gene intron. Probably assists in splicing its own and other chloroplast group II introns. The polypeptide is Maturase K (Trillium pusillum (Dwarf wakerobin)).